Here is a 275-residue protein sequence, read N- to C-terminus: Bis(5'-nucleosyl)-tetraphosphatase, symmetrical (275 aa).

Belongs to the Ap4A hydrolase family.

It catalyses the reaction P(1),P(4)-bis(5'-adenosyl) tetraphosphate + H2O = 2 ADP + 2 H(+). Functionally, hydrolyzes diadenosine 5',5'''-P1,P4-tetraphosphate to yield ADP. This Nitrosospira multiformis (strain ATCC 25196 / NCIMB 11849 / C 71) protein is Bis(5'-nucleosyl)-tetraphosphatase, symmetrical.